Consider the following 143-residue polypeptide: Putative cytokinin riboside 5'-monophosphate phosphoribohydrolase LOG9 (143 aa).

Substrate contacts are provided by residues 23–24 (RK), 41–47 (RYETMEE), and T53.

It belongs to the LOG family.

The catalysed reaction is N(6)-(dimethylallyl)adenosine 5'-phosphate + H2O = N(6)-dimethylallyladenine + D-ribose 5-phosphate. It catalyses the reaction 9-ribosyl-trans-zeatin 5'-phosphate + H2O = trans-zeatin + D-ribose 5-phosphate. Functionally, cytokinin-activating enzyme working in the direct activation pathway. Phosphoribohydrolase that converts inactive cytokinin nucleotides to the biologically active free-base forms. This chain is Putative cytokinin riboside 5'-monophosphate phosphoribohydrolase LOG9 (LOG9), found in Arabidopsis thaliana (Mouse-ear cress).